The chain runs to 197 residues: Imidazoleglycerol-phosphate dehydratase (197 aa).

It belongs to the imidazoleglycerol-phosphate dehydratase family.

The protein localises to the cytoplasm. The catalysed reaction is D-erythro-1-(imidazol-4-yl)glycerol 3-phosphate = 3-(imidazol-4-yl)-2-oxopropyl phosphate + H2O. Its pathway is amino-acid biosynthesis; L-histidine biosynthesis; L-histidine from 5-phospho-alpha-D-ribose 1-diphosphate: step 6/9. This chain is Imidazoleglycerol-phosphate dehydratase, found in Nitrosococcus oceani (strain ATCC 19707 / BCRC 17464 / JCM 30415 / NCIMB 11848 / C-107).